Consider the following 375-residue polypeptide: Protein RecA (375 aa).

75–82 (GPESSGKT) serves as a coordination point for ATP. The segment at 339 to 375 (GPYAKMKDEQTEEAAGDQMDEDKPIDLSPNFDDDDAN) is disordered. A compositionally biased stretch (acidic residues) spans 348 to 358 (QTEEAAGDQMD).

The protein belongs to the RecA family.

It localises to the cytoplasm. Can catalyze the hydrolysis of ATP in the presence of single-stranded DNA, the ATP-dependent uptake of single-stranded DNA by duplex DNA, and the ATP-dependent hybridization of homologous single-stranded DNAs. It interacts with LexA causing its activation and leading to its autocatalytic cleavage. This chain is Protein RecA, found in Corynebacterium jeikeium (strain K411).